The following is a 310-amino-acid chain: uncharacterized protein (310 aa).

The Cytoplasmic segment spans residues 1 to 6 (MISEKA). The region spanning 5 to 69 (KAATALATIA…SKGNVILQVQ (65 aa)) is the PQ-loop 1 domain. A helical transmembrane segment spans residues 7–27 (ATALATIATVCWCVQLIPQII). At 28–36 (YNWKKKDCT) the chain is on the extracellular side. The chain crosses the membrane as a helical span at residues 37-57 (GLPPLMMFLWVVSGIPFAIYF). The Cytoplasmic segment spans residues 58 to 61 (CVSK). The helical transmembrane segment at 62 to 82 (GNVILQVQPHLFMFFCSISFV) threads the bilayer. The Extracellular segment spans residues 83 to 96 (QSCYYPPISMARSK). The helical transmembrane segment at 97 to 117 (IVMIVAAIIAADVGMEVGFIL) threads the bilayer. At 118 to 131 (WLRPLYEKGVKWPD) the chain is on the cytoplasmic side. A helical membrane pass occupies residues 132–152 (LIFGISASVLLAVGLLPPYFE). Positions 138–194 (ASVLLAVGLLPPYFELAKRKGRVIGINFAFLFIDSLGAWLSIISVILGNMDIMGIIL) constitute a PQ-loop 2 domain. Topologically, residues 153-164 (LAKRKGRVIGIN) are extracellular. The chain crosses the membrane as a helical span at residues 165-185 (FAFLFIDSLGAWLSIISVILG). Residues 186–191 (NMDIMG) lie on the Cytoplasmic side of the membrane. Residues 192 to 212 (IILYSIVAGMELGIFASHFIW) form a helical membrane-spanning segment. At 213–310 (WCRFRFLAKG…DPDRYSRLSV (98 aa)) the chain is on the extracellular side. At S229 the chain carries Phosphoserine. N-linked (GlcNAc...) asparagine glycans are attached at residues N251 and N259.

The protein resides in the cell membrane. This is an uncharacterized protein from Saccharomyces cerevisiae (strain ATCC 204508 / S288c) (Baker's yeast).